The following is a 294-amino-acid chain: MKIGIYGQFYHANAAQYIGQLLELLDQRNIEVLIEEDFLKLIHSNNKIEKDYKHFSAFEELDNSFDLFFCIGGDGTILKSINYIRNLDIPIVGINTGRLGFLATIQKEQIESTLEELLEKKFSLSPRSVLTMQTNPRSYDPVFSHIALNEIAVSRKNTTSMITVDTWLDDQYLTSYWADGLIISTPTGSTGYSLSCGGPVITPDADSLVITPIAPHNLNARPLVIKDHTTIKLKVSGRGKEHLVSMDSRIATLQNDTEIIIKKAPYTINFVELQGDSFLNTLRKKLLWGEDKRN.

Asp-74 acts as the Proton acceptor in catalysis. Residues 74-75, Lys-79, 149-150, Asp-179, 190-195, and Ala-214 each bind NAD(+); these read DG, NE, and TGYSLS.

It belongs to the NAD kinase family. Requires a divalent metal cation as cofactor.

The protein localises to the cytoplasm. The catalysed reaction is NAD(+) + ATP = ADP + NADP(+) + H(+). Its function is as follows. Involved in the regulation of the intracellular balance of NAD and NADP, and is a key enzyme in the biosynthesis of NADP. Catalyzes specifically the phosphorylation on 2'-hydroxyl of the adenosine moiety of NAD to yield NADP. This chain is NAD kinase, found in Christiangramia forsetii (strain DSM 17595 / CGMCC 1.15422 / KT0803) (Gramella forsetii).